Reading from the N-terminus, the 128-residue chain is Small ribosomal subunit protein uS12 (128 aa).

Asp-89 is modified (3-methylthioaspartic acid).

The protein belongs to the universal ribosomal protein uS12 family. In terms of assembly, part of the 30S ribosomal subunit. Contacts proteins S8 and S17. May interact with IF1 in the 30S initiation complex.

In terms of biological role, with S4 and S5 plays an important role in translational accuracy. Functionally, interacts with and stabilizes bases of the 16S rRNA that are involved in tRNA selection in the A site and with the mRNA backbone. Located at the interface of the 30S and 50S subunits, it traverses the body of the 30S subunit contacting proteins on the other side and probably holding the rRNA structure together. The combined cluster of proteins S8, S12 and S17 appears to hold together the shoulder and platform of the 30S subunit. The polypeptide is Small ribosomal subunit protein uS12 (Campylobacter jejuni subsp. jejuni serotype O:6 (strain 81116 / NCTC 11828)).